The following is a 508-amino-acid chain: Photosystem II CP47 reaction center protein (508 aa).

6 helical membrane-spanning segments follow: residues 21–36 (AVHL…WAGS), 101–115 (IILS…IWHW), 140–156 (GIHL…FGAF), 203–218 (IAAG…FHLS), 237–252 (VLSS…AFVV), and 457–472 (IFAL…HGAR).

It belongs to the PsbB/PsbC family. PsbB subfamily. PSII is composed of 1 copy each of membrane proteins PsbA, PsbB, PsbC, PsbD, PsbE, PsbF, PsbH, PsbI, PsbJ, PsbK, PsbL, PsbM, PsbT, PsbY, PsbZ, Psb30/Ycf12, at least 3 peripheral proteins of the oxygen-evolving complex and a large number of cofactors. It forms dimeric complexes. The cofactor is Binds multiple chlorophylls. PSII binds additional chlorophylls, carotenoids and specific lipids..

The protein localises to the plastid. Its subcellular location is the chloroplast thylakoid membrane. In terms of biological role, one of the components of the core complex of photosystem II (PSII). It binds chlorophyll and helps catalyze the primary light-induced photochemical processes of PSII. PSII is a light-driven water:plastoquinone oxidoreductase, using light energy to abstract electrons from H(2)O, generating O(2) and a proton gradient subsequently used for ATP formation. The sequence is that of Photosystem II CP47 reaction center protein from Bigelowiella natans (Pedinomonas minutissima).